The sequence spans 564 residues: Septation ring formation regulator EzrA (564 aa).

The Extracellular segment spans residues 1–2; it reads MV. The helical transmembrane segment at 3–21 threads the bilayer; it reads FVISVILAIIVILTIGLIL. The Cytoplasmic segment spans residues 22 to 564; that stretch reads RKRIYDKVDH…IEENQLTLNR (543 aa). Coiled-coil stretches lie at residues 101-140, 168-215, 251-436, and 468-537; these read ANNILTEGDQKLQNIEVKIEEILEELDELLSSEKTSREEV, FDKK…MEQF, GFDK…KKSN, and DIAK…ELSL.

It belongs to the EzrA family.

The protein localises to the cell membrane. Functionally, negative regulator of FtsZ ring formation; modulates the frequency and position of FtsZ ring formation. Inhibits FtsZ ring formation at polar sites. Interacts either with FtsZ or with one of its binding partners to promote depolymerization. This chain is Septation ring formation regulator EzrA, found in Oceanobacillus iheyensis (strain DSM 14371 / CIP 107618 / JCM 11309 / KCTC 3954 / HTE831).